Reading from the N-terminus, the 317-residue chain is Ciliary microtubule inner protein 2A (317 aa).

Positions Thr-131–Pro-153 are disordered.

This sequence belongs to the CIMIP2 family. Microtubule inner protein component of sperm flagellar doublet microtubules.

Its subcellular location is the cytoplasm. The protein resides in the cytoskeleton. The protein localises to the flagellum axoneme. Functionally, microtubule inner protein (MIP) part of the dynein-decorated doublet microtubules (DMTs) in flagellum axoneme. Binds to the intra-tubulin interfaces. This Homo sapiens (Human) protein is Ciliary microtubule inner protein 2A.